Reading from the N-terminus, the 322-residue chain is MSGSAEHLKDEGSKTQSMIAGATAGLIARFVIAPLDVVKIRLQLQSHSASDPLSHRDLRGSLIYKGTLPTIKRIFREEGLSALWKGNVPAELMYVSYSAIQFTTYRSVTLALQDTVGEHRMPAAAESFIAGASAGAVATTATYPLDLLRTRFAAQGVERIYTSLRASIRDIAVNEGPRGFFQGLGAGVGQIIPYMGIFFATYETLRVPLGTLHMPFGSGDATAGVLASVIAKTGIFPFDLIRKRLQVQGPTRERYVHKNIPVYNGVFRTMRHIIQNEGYRGLYRGLTVSLFKAAPASAVTMWTYERVLRLLLKWEKAQESPT.

3 Solcar repeats span residues 12–111 (GSKT…VTLA), 122–208 (PAAA…LRVP), and 215–310 (PFGS…VLRL). The next 6 membrane-spanning stretches (helical) occupy residues 18–38 (MIAG…LDVV), 92–108 (LMYV…YRSV), 128–148 (FIAG…LDLL), 180–200 (FFQG…IFFA), 221–241 (ATAG…FDLI), and 285–302 (GLTV…VTMW).

It belongs to the mitochondrial carrier (TC 2.A.29) family.

The protein resides in the mitochondrion inner membrane. Its function is as follows. Mitochondrial transporter that mediates uptake of thiamine pyrophosphate (ThPP) into mitochondria. The protein is Mitochondrial thiamine pyrophosphate carrier 1 (tpc1) of Sclerotinia sclerotiorum (strain ATCC 18683 / 1980 / Ss-1) (White mold).